A 376-amino-acid chain; its full sequence is Light-dependent chlorophyll f synthase (376 aa).

The interval 1 to 22 is disordered; that stretch reads MKLESDHVIATSDSSDYTSEPT. Over residues 11 to 22 the composition is skewed to polar residues; sequence TSDSSDYTSEPT. 5 helical membrane-spanning segments follow: residues 51 to 68, 140 to 155, 164 to 178, 219 to 240, and 298 to 312; these read YVGWFGVLMIPCVLTAAT, HFLIGIIAYQDREWEL, WISLAFTAPVAASVS, LHQLGVIGVLGGAFAAAMHGSL, and FLAALPVAGIWSAAL. Residue His-140 participates in a chlorophyll binding. His-220 is an a chlorophyll binding site.

Belongs to the reaction center PufL/M/PsbA/D family. In terms of assembly, homodimer.

It localises to the cellular thylakoid membrane. Synthesizes chlorophyll f or chlorophyllide f (Chl f, 2-formyl chlorophyll a), probably by oxidation of chlorophyll a or chlorophyllide a and reduction of plastoquinone. The reaction is probably light-dependent. Chl f absorbs far red light (FRL, 707 nm in 100% methanol), and is synthesized when cells are grown in FRL, where it provides the advantage of extending the spectral range of harvested light in terrestrial cyanobacteria. When ectopically expressed in Synechococcus PCC 7002 (which does not grow in FRL and does not make Chl f) produces Chl f (0.059% of total chlorophyll). The polypeptide is Light-dependent chlorophyll f synthase (Chlorogloeopsis fritschii (strain PCC 9212)).